A 606-amino-acid chain; its full sequence is Atypical protein kinase C (606 aa).

The PB1 domain maps to 30-113 (SITVKTAYNG…SQLVIHVFPN (84 aa)). Residues 145–195 (GHIFQAKRFNRRAFCAYCQDRIWGLGRQGFKCIQCKLLVHKKCHKLVQKHC) form a Phorbol-ester/DAG-type zinc finger. Residues 264-532 (FELIRVIGRG…FMDIVSHPFF (269 aa)) form the Protein kinase domain. ATP contacts are provided by residues 270-278 (IGRGSYAKV) and K293. The active-site Proton acceptor is the D388. The 72-residue stretch at 533–604 (KNMDWELLER…VNPLLMSLED (72 aa)) folds into the AGC-kinase C-terminal domain.

The protein belongs to the protein kinase superfamily. AGC Ser/Thr protein kinase family. PKC subfamily. In terms of assembly, interacts with baz; the interaction is required for apical localization of aPKC in neuroblasts and epithelial cells. Interacts with Dap160; the interaction promotes aPKC apical localization and kinase activity. Interacts with and phosphorylates l(2)gl and yrt. Interacts with crb and ref(2)P. Forms a complex with baz, fz and Patj. As to expression, expressed in the testis. In spermatid cysts, localizes near the tips of spermatid flagellar axonemes (at protein level). Detectable in freshly laid eggs before onset of zygotic transcription so is deposited in the egg during oogenesis. At the cellular blastoderm stage, present in all cells except the pole cells. During gastrulation, strongly expressed in tissues undergoing morphogenetic movements such as invaginating mesoderm, proctodeum and cephalic furrow. Strongly expressed in neuroblasts.

It localises to the cytoplasm. The protein resides in the cell cortex. It is found in the apicolateral cell membrane. The enzyme catalyses L-seryl-[protein] + ATP = O-phospho-L-seryl-[protein] + ADP + H(+). It carries out the reaction L-threonyl-[protein] + ATP = O-phospho-L-threonyl-[protein] + ADP + H(+). Functionally, serine/threonine protein kinase which is required for apico-basal cell polarity in the germ line as well as in epithelial and neural precursor cells, for epithelial planar cell polarity and for cell proliferation. During oocyte development, required for the posterior translocation of oocyte specification factors and for the posterior establishment of the microtubule organizing center within the presumptive oocyte. Phosphorylates l(2)gl which restricts l(2)gl activity to the oocyte posterior and regulates posterior enrichment of par-1, leading to establishment of correct oocyte polarity. Essential for apical localization of l(2)gl and par-6 in neuroblasts and for exclusion of mira from the apical cortex. Phosphorylates baz which is required for targeting of baz to the postsynaptic region where it is involved in actin organization, and for apical exclusion of baz which is necessary for establishment of the apical/lateral border in epithelial cells. Phosphorylates yrt which prevents its premature apical localization and is necessary for correct epithelial cell polarization. Required for the establishment of mitotic spindle orientation during symmetric division of epithelial cells and for apical exclusion of raps/Pins. Involved in symmetric adherens junction positioning during embryogenesis. Required for polarization of the spermatid cyst which is necessary for sperm differentiation. Required for stimulation of the Toll signaling pathway which activates Dif and dl and plays a role in innate immunity. Plays a role in memory enhancement. This chain is Atypical protein kinase C, found in Drosophila melanogaster (Fruit fly).